Reading from the N-terminus, the 194-residue chain is Putative manganese efflux pump MntP (194 aa).

Transmembrane regions (helical) follow at residues 3-23, 37-57, 69-89, 110-132, 147-167, and 172-192; these read PFSI…AAIG, LRAG…GWLL, DHWI…VAGL, LGLA…SLAF, CTFS…NLIG, and MLGG…HLSG.

The protein belongs to the MntP (TC 9.B.29) family.

Its subcellular location is the cell inner membrane. Probably functions as a manganese efflux pump. In Xanthomonas euvesicatoria pv. vesicatoria (strain 85-10) (Xanthomonas campestris pv. vesicatoria), this protein is Putative manganese efflux pump MntP.